The sequence spans 397 residues: LIM/homeobox protein Lhx9 (397 aa).

LIM zinc-binding domains lie at Ala-69 to Val-130 and Gln-131 to Gly-193. Disordered regions lie at residues Glu-248–Thr-272 and Glu-330–Asp-364. The segment at residues Thr-267–Leu-326 is a DNA-binding region (homeobox).

As to quaternary structure, interacts with LDB1 and LDB2.

It is found in the nucleus. Its function is as follows. Involved in gonadal development. This Bos taurus (Bovine) protein is LIM/homeobox protein Lhx9 (LHX9).